Reading from the N-terminus, the 431-residue chain is 23S rRNA (uracil(1939)-C(5))-methyltransferase RlmD (431 aa).

In terms of domain architecture, TRAM spans 10-68 (RVTTRQIITVKVNDLDSFGQGVARHNGKALFIPGLLPEESAEVIITEDKKQFARARVSR). Positions 81, 87, 90, and 161 each coordinate [4Fe-4S] cluster. The S-adenosyl-L-methionine site is built by glutamine 264, phenylalanine 293, asparagine 298, glutamate 314, asparagine 341, and aspartate 362. Cysteine 388 functions as the Nucleophile in the catalytic mechanism.

This sequence belongs to the class I-like SAM-binding methyltransferase superfamily. RNA M5U methyltransferase family. RlmD subfamily.

The catalysed reaction is uridine(1939) in 23S rRNA + S-adenosyl-L-methionine = 5-methyluridine(1939) in 23S rRNA + S-adenosyl-L-homocysteine + H(+). In terms of biological role, catalyzes the formation of 5-methyl-uridine at position 1939 (m5U1939) in 23S rRNA. This Salmonella paratyphi A (strain ATCC 9150 / SARB42) protein is 23S rRNA (uracil(1939)-C(5))-methyltransferase RlmD.